A 122-amino-acid polypeptide reads, in one-letter code: Large ribosomal subunit protein uL14 (122 aa).

It belongs to the universal ribosomal protein uL14 family. As to quaternary structure, part of the 50S ribosomal subunit. Forms a cluster with proteins L3 and L19. In the 70S ribosome, L14 and L19 interact and together make contacts with the 16S rRNA in bridges B5 and B8.

Its function is as follows. Binds to 23S rRNA. Forms part of two intersubunit bridges in the 70S ribosome. This is Large ribosomal subunit protein uL14 from Mycobacterium ulcerans (strain Agy99).